The primary structure comprises 397 residues: Succinyl-diaminopimelate desuccinylase (397 aa).

A Zn(2+)-binding site is contributed by His-73. Asp-75 is a catalytic residue. A Zn(2+)-binding site is contributed by Asp-106. The active-site Proton acceptor is the Glu-140. Zn(2+)-binding residues include Glu-141, Glu-169, and His-366.

This sequence belongs to the peptidase M20A family. DapE subfamily. In terms of assembly, homodimer. It depends on Zn(2+) as a cofactor. The cofactor is Co(2+).

It catalyses the reaction N-succinyl-(2S,6S)-2,6-diaminopimelate + H2O = (2S,6S)-2,6-diaminopimelate + succinate. Its pathway is amino-acid biosynthesis; L-lysine biosynthesis via DAP pathway; LL-2,6-diaminopimelate from (S)-tetrahydrodipicolinate (succinylase route): step 3/3. Catalyzes the hydrolysis of N-succinyl-L,L-diaminopimelic acid (SDAP), forming succinate and LL-2,6-diaminopimelate (DAP), an intermediate involved in the bacterial biosynthesis of lysine and meso-diaminopimelic acid, an essential component of bacterial cell walls. This Rhizobium leguminosarum bv. trifolii (strain WSM2304) protein is Succinyl-diaminopimelate desuccinylase.